A 540-amino-acid chain; its full sequence is Chaperonin GroEL (540 aa).

Residues 29-32, 86-90, Gly413, 476-478, and Asp492 contribute to the ATP site; these read TLGP, DGTTT, and NAA.

The protein belongs to the chaperonin (HSP60) family. As to quaternary structure, forms a cylinder of 14 subunits composed of two heptameric rings stacked back-to-back. Interacts with the co-chaperonin GroES.

Its subcellular location is the cytoplasm. The enzyme catalyses ATP + H2O + a folded polypeptide = ADP + phosphate + an unfolded polypeptide.. Together with its co-chaperonin GroES, plays an essential role in assisting protein folding. The GroEL-GroES system forms a nano-cage that allows encapsulation of the non-native substrate proteins and provides a physical environment optimized to promote and accelerate protein folding. The protein is Chaperonin GroEL of Streptococcus gordonii.